Reading from the N-terminus, the 273-residue chain is 4-hydroxy-3-methylbut-2-enyl diphosphate reductase (273 aa).

Cysteine 12 contributes to the [4Fe-4S] cluster binding site. (2E)-4-hydroxy-3-methylbut-2-enyl diphosphate-binding residues include histidine 36 and histidine 70. 2 residues coordinate dimethylallyl diphosphate: histidine 36 and histidine 70. Isopentenyl diphosphate is bound by residues histidine 36 and histidine 70. A [4Fe-4S] cluster-binding site is contributed by cysteine 92. Position 120 (histidine 120) interacts with (2E)-4-hydroxy-3-methylbut-2-enyl diphosphate. Histidine 120 provides a ligand contact to dimethylallyl diphosphate. Residue histidine 120 coordinates isopentenyl diphosphate. Residue glutamate 122 is the Proton donor of the active site. Threonine 157 provides a ligand contact to (2E)-4-hydroxy-3-methylbut-2-enyl diphosphate. [4Fe-4S] cluster is bound at residue cysteine 185. (2E)-4-hydroxy-3-methylbut-2-enyl diphosphate contacts are provided by serine 213, serine 214, asparagine 215, and serine 257. Serine 213, serine 214, asparagine 215, and serine 257 together coordinate dimethylallyl diphosphate. 4 residues coordinate isopentenyl diphosphate: serine 213, serine 214, asparagine 215, and serine 257.

The protein belongs to the IspH family. [4Fe-4S] cluster serves as cofactor.

The catalysed reaction is isopentenyl diphosphate + 2 oxidized [2Fe-2S]-[ferredoxin] + H2O = (2E)-4-hydroxy-3-methylbut-2-enyl diphosphate + 2 reduced [2Fe-2S]-[ferredoxin] + 2 H(+). The enzyme catalyses dimethylallyl diphosphate + 2 oxidized [2Fe-2S]-[ferredoxin] + H2O = (2E)-4-hydroxy-3-methylbut-2-enyl diphosphate + 2 reduced [2Fe-2S]-[ferredoxin] + 2 H(+). It functions in the pathway isoprenoid biosynthesis; dimethylallyl diphosphate biosynthesis; dimethylallyl diphosphate from (2E)-4-hydroxy-3-methylbutenyl diphosphate: step 1/1. The protein operates within isoprenoid biosynthesis; isopentenyl diphosphate biosynthesis via DXP pathway; isopentenyl diphosphate from 1-deoxy-D-xylulose 5-phosphate: step 6/6. In terms of biological role, catalyzes the conversion of 1-hydroxy-2-methyl-2-(E)-butenyl 4-diphosphate (HMBPP) into a mixture of isopentenyl diphosphate (IPP) and dimethylallyl diphosphate (DMAPP). Acts in the terminal step of the DOXP/MEP pathway for isoprenoid precursor biosynthesis. This Helicobacter hepaticus (strain ATCC 51449 / 3B1) protein is 4-hydroxy-3-methylbut-2-enyl diphosphate reductase.